The following is a 526-amino-acid chain: Bifunctional purine biosynthesis protein PurH (526 aa).

Positions 1 to 149 (MLHSLPIRRA…KNHEAVTVVV (149 aa)) constitute an MGS-like domain.

The protein belongs to the PurH family.

The catalysed reaction is (6R)-10-formyltetrahydrofolate + 5-amino-1-(5-phospho-beta-D-ribosyl)imidazole-4-carboxamide = 5-formamido-1-(5-phospho-D-ribosyl)imidazole-4-carboxamide + (6S)-5,6,7,8-tetrahydrofolate. The enzyme catalyses IMP + H2O = 5-formamido-1-(5-phospho-D-ribosyl)imidazole-4-carboxamide. It participates in purine metabolism; IMP biosynthesis via de novo pathway; 5-formamido-1-(5-phospho-D-ribosyl)imidazole-4-carboxamide from 5-amino-1-(5-phospho-D-ribosyl)imidazole-4-carboxamide (10-formyl THF route): step 1/1. The protein operates within purine metabolism; IMP biosynthesis via de novo pathway; IMP from 5-formamido-1-(5-phospho-D-ribosyl)imidazole-4-carboxamide: step 1/1. The polypeptide is Bifunctional purine biosynthesis protein PurH (Rhodospirillum rubrum (strain ATCC 11170 / ATH 1.1.1 / DSM 467 / LMG 4362 / NCIMB 8255 / S1)).